The chain runs to 602 residues: Solute carrier organic anion transporter family member 1C1 (602 aa).

The Cytoplasmic portion of the chain corresponds to 1–43 (MDTSSKENIQLFCKTSVQPVGRPSFKTEYPSSEEKQPCCGELK). The helical transmembrane segment at 44–63 (VFLGALSFVYFAKALAEGYL) threads the bilayer. The Extracellular portion of the chain corresponds to 64–82 (KSTITQIERRFDIPSSLVG). Residues 83 to 103 (VIDGSFEIGNLLVITFVSYFG) traverse the membrane as a helical segment. Residues 104–109 (AKLHRP) are Cytoplasmic-facing. Residues 110 to 134 (KIIGAGCLIMGVGTLLIAMPQFFME) traverse the membrane as a helical segment. Residues 135–139 (QYKYE) lie on the Extracellular side of the membrane. Residues 140–156 (IYSPSSNSTLSISPCLL) traverse the membrane as a helical segment. At 157-238 (ESSSQLPVSV…ARDFLPSLKY (82 aa)) the chain is on the cytoplasmic side. Residues 190 to 216 (PRSQSREDSNSSSEKSKFIRDDHTDYQ) form a disordered region. Residues 193–214 (QSREDSNSSSEKSKFIRDDHTD) are compositionally biased toward basic and acidic residues. Residues 239–260 (LFGNPVYFLYLCTSTVQFNSLF) traverse the membrane as a helical segment. Residues 261-280 (GMVTYKPKYIEQQYGQSSSR) lie on the Extracellular side of the membrane. Residues 281–304 (ANFVIGLINIPAVALGIFSGGIAM) form a helical membrane-spanning segment. Topologically, residues 305–308 (KKFR) are cytoplasmic. The chain crosses the membrane as a helical span at residues 309-332 (ISVCGAAKLYLGSSVFGYLLFLSL). The Extracellular segment spans residues 333–444 (FALGCENSDV…NGCPQMFLYF (112 aa)). One can recognise a Kazal-like domain in the interval 360–415 (RALFSDCNPRCKCSETKWEPMCGENGITYVSACPAGCQTSNRSGKNIIFYNCTCVG). Disulfide bonds link Cys366–Cys396, Cys372–Cys392, and Cys381–Cys413. Residues Asn400, Asn410, and Asn423 are each glycosylated (N-linked (GlcNAc...) asparagine). The chain crosses the membrane as a helical span at residues 445-467 (LVISVITSYTLSLGGIPGYILLL). At 468–476 (RCIKPQLKS) the chain is on the cytoplasmic side. Residues 477-502 (FALGIYTLSIRVLAGIPAPVYFGVLI) traverse the membrane as a helical segment. The Extracellular segment spans residues 503–536 (DTSCLKWGFKRCGSRGSCRLYDSNVFRHIYLGLT). The helical transmembrane segment at 537 to 554 (VILGTVSIFLSIAVLFIL) threads the bilayer. At 555–602 (KKNYVSKHRNFITKRERTMVSTRFQKENCTTSDHLLQPKYWPGKETQL) the chain is on the cytoplasmic side.

The protein belongs to the organo anion transporter (TC 2.A.60) family.

Its subcellular location is the cell membrane. The catalysed reaction is 3,3',5'-triiodo-L-thyronine(out) = 3,3',5'-triiodo-L-thyronine(in). It catalyses the reaction L-thyroxine(out) = L-thyroxine(in). It carries out the reaction L-thyroxine sulfate(out) = L-thyroxine sulfate(in). In terms of biological role, mediates the Na(+)-independent high affinity transport of organic anions such as the thyroid hormones L-thyroxine (T4), L-thyroxine sulfate (T4S), and 3,3',5'-triiodo-L-thyronine (reverse T3, rT3) at the plasma membrane. Regulates T4 levels in different brain regions by transporting T4, and also by serving as an export pump for T4S, which is a source of T4 after hydrolysis by local sulfatases. Increases the access of these substrates to the intracellular sites where they are metabolized by the deiodinases. Other potential substrates, such as triiodothyronine (T3), 17-beta-glucuronosyl estradiol (17beta-estradiol 17-O-(beta-D-glucuronate)), estrone-3-sulfate (E1S) and sulfobromophthalein (BSP) are transported with much lower efficiency. Transports T4 and E1S in a pH-insensitive manner. Facilitates the transport of thyroid hormones across the blood-brain barrier and into glia and neuronal cells in the brain. In Macaca fascicularis (Crab-eating macaque), this protein is Solute carrier organic anion transporter family member 1C1 (SLCO1C1).